Reading from the N-terminus, the 297-residue chain is E3 ubiquitin-protein ligase TRIM52 (297 aa).

The segment at 20–62 (CAICLDYFKDPVSISCGHNFCRGCVTQLWSKEDEEDQNEEEDE) adopts an RING-type; degenerate zinc-finger fold. Positions 72 to 167 (VGAMDGWDGS…DEDEDEELYP (96 aa)) are important for rapid proteolytic degradation by the proteasome. The B box-type zinc finger occupies 222 to 263 (NDQGMCFKHQEALKLFCEVDKEAICVVCRESRSHKQHSVLPL). Positions 227, 230, 249, and 255 each coordinate Zn(2+).

The protein belongs to the TRIM/RBCC family. As to quaternary structure, (Microbial infection) Interacts with Japanese encephalitis virus non-structural protein 2 (NS2A); mediates the ubiquitination of NS2A, targeting it for proteasome-mediated degradation. Post-translationally, autoubiquitinated. Polyubiquitinated. Undergoes extremely rapid proteolytic degradation by the proteasome.

The protein localises to the cytoplasm. It localises to the cytosol. It is found in the nucleus. It catalyses the reaction S-ubiquitinyl-[E2 ubiquitin-conjugating enzyme]-L-cysteine + [acceptor protein]-L-lysine = [E2 ubiquitin-conjugating enzyme]-L-cysteine + N(6)-ubiquitinyl-[acceptor protein]-L-lysine.. It participates in protein modification; protein ubiquitination. In terms of biological role, E3 ubiquitin-protein ligase. Positively regulates the NF-kappa-B signaling pathway. Functionally, (Microbial infection) Exhibits antiviral activity against Japanese encephalitis virus (JEV). Ubiquitinates the viral non-structural protein 2 (NS2A) and targets it for proteasome-mediated degradation. The sequence is that of E3 ubiquitin-protein ligase TRIM52 (TRIM52) from Homo sapiens (Human).